Here is a 3066-residue protein sequence, read N- to C-terminus: Genome polyprotein (3066 aa).

One can recognise a Peptidase S30 domain in the interval 176-317 (LKKAVGSGKV…LDNVYTIEHY (142 aa)). Residues His-230, Glu-239, and Ser-271 each act as for P1 proteinase activity in the active site. The Involved in interaction with stylet and aphid transmission motif lies at 370 to 373 (KLSC). Positions 626 to 628 (PTK) match the Involved in virions binding and aphid transmission motif. Residues 652–774 (MYIAKEGYCY…EGEMKHYRVG (123 aa)) form the Peptidase C6 domain. Residues Cys-660 and His-733 each act as for helper component proteinase activity in the active site. The 153-residue stretch at 1245-1397 (TITLSTSTEF…TQHPVKLKVE (153 aa)) folds into the Helicase ATP-binding domain. 1258–1265 (GAVGSGKS) contacts ATP. A DECH box motif is present at residues 1347-1350 (DECH). The 160-residue stretch at 1416–1575 (DMVQYGHNLL…GLPVTTQGVS (160 aa)) folds into the Helicase C-terminal domain. The short motif at 1900 to 1909 (KKGKQKGSTH) is the Nuclear localization signal element. Tyr-1924 carries the O-(5'-phospho-RNA)-tyrosine modification. The 219-residue stretch at 2046–2264 (SKSTYKGLRD…IAWGSLNLVD (219 aa)) folds into the Peptidase C4 domain. Catalysis depends on for nuclear inclusion protein A activity residues His-2091, Asp-2126, and Cys-2196. The RdRp catalytic domain maps to 2530–2654 (WVYCHADGSQ…AVQKEDVWLY (125 aa)). Residues 2797–2839 (EVYESVSTQSSKKEEEKDAGADEREKDKGKGPADKDVGAGSKG) form a disordered region. Over residues 2807 to 2833 (SKKEEEKDAGADEREKDKGKGPADKDV) the composition is skewed to basic and acidic residues. The residue at position 3048 (Thr-3048) is a Phosphothreonine.

The protein belongs to the potyviridae genome polyprotein family. As to quaternary structure, interacts with host eIF4E protein (via cap-binding region); this interaction mediates the translation of the VPg-viral RNA conjugates. Part of a complex that comprises VPg, RNA, host EIF4E and EIF4G; this interaction mediates the translation of the VPg-viral RNA conjugates. In terms of processing, VPg is uridylylated by the polymerase and is covalently attached to the 5'-end of the genomic RNA. This uridylylated form acts as a nucleotide-peptide primer for the polymerase. Post-translationally, genome polyprotein of potyviruses undergoes post-translational proteolytic processing by the main proteinase NIa-pro resulting in the production of at least ten individual proteins. The P1 proteinase and the HC-pro cleave only their respective C-termini autocatalytically. 6K1 is essential for proper proteolytic separation of P3 from CI.

The protein resides in the host cytoplasmic vesicle. The protein localises to the host nucleus. It is found in the virion. The enzyme catalyses RNA(n) + a ribonucleoside 5'-triphosphate = RNA(n+1) + diphosphate. It carries out the reaction Hydrolyzes glutaminyl bonds, and activity is further restricted by preferences for the amino acids in P6 - P1' that vary with the species of potyvirus, e.g. Glu-Xaa-Xaa-Tyr-Xaa-Gln-|-(Ser or Gly) for the enzyme from tobacco etch virus. The natural substrate is the viral polyprotein, but other proteins and oligopeptides containing the appropriate consensus sequence are also cleaved.. It catalyses the reaction Hydrolyzes a Gly-|-Gly bond at its own C-terminus, commonly in the sequence -Tyr-Xaa-Val-Gly-|-Gly, in the processing of the potyviral polyprotein.. In terms of biological role, required for aphid transmission and also has proteolytic activity. Only cleaves a Gly-Gly dipeptide at its own C-terminus. Interacts with virions and aphid stylets. Acts as a suppressor of RNA-mediated gene silencing, also known as post-transcriptional gene silencing (PTGS), a mechanism of plant viral defense that limits the accumulation of viral RNAs. May have RNA-binding activity. Its function is as follows. Has helicase activity. It may be involved in replication. Functionally, indispensable for virus replication. Reduces the abundance of host transcripts related to jasmonic acid biosynthesis therefore altering the host defenses. In order to increase its own stability, decreases host protein degradation pathways. Indispensable for virus replication. In terms of biological role, mediates the cap-independent, EIF4E-dependent translation of viral genomic RNAs. Binds to the cap-binding site of host EIF4E and thus interferes with the host EIF4E-dependent mRNA export and translation. VPg-RNA directly binds EIF4E and is a template for transcription. Also forms trimeric complexes with EIF4E-EIF4G, which are templates for translation. Its function is as follows. Has RNA-binding and proteolytic activities. Functionally, an RNA-dependent RNA polymerase that plays an essential role in the virus replication. Involved in aphid transmission, cell-to-cell and systemis movement, encapsidation of the viral RNA and in the regulation of viral RNA amplification. This is Genome polyprotein from Bean common mosaic necrosis virus (strain NL-3) (BCMNV).